The sequence spans 168 residues: Vasopressin-neurophysin 2-copeptin (168 aa).

Positions 1-23 (MLAMMLNTTLSACFLSLLALTSA) are cleaved as a signal peptide. Cysteines 24 and 29 form a disulfide. A Glycine amide modification is found at Gly32. Intrachain disulfides connect Cys45–Cys89, Cys48–Cys62, Cys56–Cys79, Cys63–Cys69, Cys96–Cys108, Cys102–Cys120, and Cys109–Cys114. N-linked (GlcNAc...) asparagine glycosylation is present at Asn135.

This sequence belongs to the vasopressin/oxytocin family. Interacts with vasopressin receptors V1bR/AVPR1B (Ki=85 pM), V1aR/AVPR1A (Ki=0.6 nM) and V2R/AVPR2 (Ki=4.9 nM). Interacts with oxytocin receptor (OXTR) (Ki=110 nM).

The protein localises to the secreted. Functionally, neurophysin 2 specifically binds vasopressin. Vasopressin has a direct antidiuretic action on the kidney, it also causes vasoconstriction of the peripheral vessels. Acts by binding to vasopressin receptors (V1bR/AVPR1B, V1aR/AVPR1A, and V2R/AVPR2). This Rattus norvegicus (Rat) protein is Vasopressin-neurophysin 2-copeptin (Avp).